The primary structure comprises 1221 residues: 2-oxoglutarate dehydrogenase E1/E2 component (1221 aa).

The segment at 2 to 40 is 2-oxoglutarate dehydrogenase E1, N-terminal part; that stretch reads SSASTFGQNAWLVDEMFQQFQKDPKSVDKEWRELFEAQG. The disordered stretch occupies residues 22-107; that stretch reads QKDPKSVDKE…KLPEPGQTPI (86 aa). Residues 23-36 show a composition bias toward basic and acidic residues; that stretch reads KDPKSVDKEWRELF. Over residues 41-52 the composition is skewed to polar residues; sequence GPNTTPATTEAQ. The linker stretch occupies residues 41–89; it reads GPNTTPATTEAQPSAPKESAKPAPKAAPAAKAAPRVETKPADKTAPKAK. Over residues 53–73 the composition is skewed to low complexity; that stretch reads PSAPKESAKPAPKAAPAAKAA. Residues 74 to 90 are compositionally biased toward basic and acidic residues; it reads PRVETKPADKTAPKAKE. Residues 90-337 form a succinyltransferase E2 region; it reads ESSVPQQPKL…LRTMSRLLTD (248 aa). Residue His316 is the Proton acceptor; for succinyltransferase activity of the active site. Residues 338-1221 form a 2-oxoglutarate dehydrogenase E1, C-terminal part region; sequence DSFWDEIFDA…KQLIDEAFEA (884 aa). Arg544 is a thiamine diphosphate binding site. 2 residues coordinate 2-oxoglutarate: His583 and Ser608. The thiamine diphosphate site is built by Ser608, Leu610, Asp645, Ala646, Ala647, and Asn678. Residue Asp645 coordinates Mg(2+). Mg(2+) is bound by residues Asn678 and Ile680. A 2-oxoglutarate-binding site is contributed by His1017. Acetyl-CoA contacts are provided by Thr1035, Arg1051, Lys1087, Ser1090, and Arg1144.

It in the N-terminal section; belongs to the alpha-ketoglutarate dehydrogenase family. In the C-terminal section; belongs to the 2-oxoacid dehydrogenase family. Homodimer. Part of an unusual ODH/PDH supercomplex, consisting of AceE (E1), AceF (E2), and Lpd (E3) together with OdhA (E1+E2). Interacts with the FHA domain of unphosphorylated OdhI via its C-terminal dehydrogenase domain. The cofactor is Mg(2+). Thiamine diphosphate serves as cofactor.

The catalysed reaction is N(6)-[(R)-lipoyl]-L-lysyl-[protein] + 2-oxoglutarate + H(+) = N(6)-[(R)-S(8)-succinyldihydrolipoyl]-L-lysyl-[protein] + CO2. It catalyses the reaction N(6)-[(R)-dihydrolipoyl]-L-lysyl-[protein] + succinyl-CoA = N(6)-[(R)-S(8)-succinyldihydrolipoyl]-L-lysyl-[protein] + CoA. The protein operates within carbohydrate metabolism; tricarboxylic acid cycle; succinyl-CoA from 2-oxoglutarate (dehydrogenase route): step 1/1. Its activity is regulated as follows. Inhibited by unphosphorylated OdhI, but not by phosphorylated OdhI. Its function is as follows. Catalyzes the E1 and E2 reactions as part of 2-oxoglutarate dehydrogenase (ODH) activity, to convert 2-oxoglutarate to succinyl-CoA and CO(2). OdhA has reductase activity with 2-oxoglutarate but does not react with pyruvate, and also displays transsuccinylase but no transacetylase activity. Since OdhA is not lipoylated, the succinyltransferase activity of its E2 domain is dependent on lipoyl residues of the acetyltransferase AceF. The chain is 2-oxoglutarate dehydrogenase E1/E2 component from Corynebacterium glutamicum (strain ATCC 13032 / DSM 20300 / JCM 1318 / BCRC 11384 / CCUG 27702 / LMG 3730 / NBRC 12168 / NCIMB 10025 / NRRL B-2784 / 534).